We begin with the raw amino-acid sequence, 206 residues long: dITP/XTP pyrophosphatase (206 aa).

Substrate is bound at residue 7–12; that stretch reads SCHGYK. The active-site Proton acceptor is the D70. D70 provides a ligand contact to Mg(2+). Substrate contacts are provided by residues T71, 154 to 157, K177, and 182 to 183; these read FGYD and HR.

Belongs to the HAM1 NTPase family. As to quaternary structure, homodimer. Mg(2+) serves as cofactor.

The enzyme catalyses XTP + H2O = XMP + diphosphate + H(+). It carries out the reaction dITP + H2O = dIMP + diphosphate + H(+). It catalyses the reaction ITP + H2O = IMP + diphosphate + H(+). Functionally, pyrophosphatase that catalyzes the hydrolysis of nucleoside triphosphates to their monophosphate derivatives, with a high preference for the non-canonical purine nucleotides XTP (xanthosine triphosphate), dITP (deoxyinosine triphosphate) and ITP. Seems to function as a house-cleaning enzyme that removes non-canonical purine nucleotides from the nucleotide pool, thus preventing their incorporation into DNA/RNA and avoiding chromosomal lesions. This is dITP/XTP pyrophosphatase from Chlamydia caviae (strain ATCC VR-813 / DSM 19441 / 03DC25 / GPIC) (Chlamydophila caviae).